The sequence spans 213 residues: Transmembrane protein 186 (213 aa).

The Mitochondrial matrix segment spans residues 1–79; sequence MAALLRAVRR…FLSRLKLAQT (79 aa). Residues 80–100 form a helical membrane-spanning segment; that stretch reads ALTVVALPPGYYLYSQGLLTL. The Mitochondrial intermembrane portion of the chain corresponds to 101-102; sequence NT. A helical membrane pass occupies residues 103–123; it reads VCLMSGISGFALTMLCWMSYF. Topologically, residues 124–213 are mitochondrial matrix; it reads LRRLVGILYL…QVFGVHQMLK (90 aa).

Belongs to the TMEM186 family. Part of the mitochondrial complex I assembly/MCIA complex that comprises at least the core subunits TMEM126B, NDUFAF1, ECSIT and ACAD9 and complement subunits such as COA1 and TMEM186. Interacts with MT-ND3.

It is found in the mitochondrion inner membrane. As part of the MCIA complex, required for efficient assembly of the mitochondrial complex I. The protein is Transmembrane protein 186 of Homo sapiens (Human).